The chain runs to 859 residues: Photoactivated adenylate cyclase subunit beta (859 aa).

The 94-residue stretch at 56 to 149 (LRRLMYLSKS…GRMYGDWHMK (94 aa)) folds into the BLUF 1 domain. Positions 205-333 (VVTFIYLVEF…DCINTTSRIA (129 aa)) constitute a Guanylate cyclase 1 domain. The interval 420–443 (RPPIFDDTPKGNPRPRTPGYGGRQ) is disordered. The BLUF 2 domain occupies 471–563 (LTTLTYISQA…RVYPSEWTLT (93 aa)). The Guanylate cyclase 2 domain occupies 619-748 (VMLATDICSF…AVSARVMEVE (130 aa)). The segment at 813–859 (AARSGEKPLTEPEEAKPDFRVSPGRVRHGDSGRRSNSAQGKRSIQVR) is disordered. Positions 815 to 831 (RSGEKPLTEPEEAKPDF) are enriched in basic and acidic residues. Residues 846-859 (RSNSAQGKRSIQVR) show a composition bias toward polar residues.

The protein belongs to the adenylyl cyclase class-4/guanylyl cyclase family. Heterotetramer of two alpha and two beta subunits. It depends on FAD as a cofactor.

The protein resides in the cell projection. It localises to the cilium. Its subcellular location is the flagellum. It catalyses the reaction ATP = 3',5'-cyclic AMP + diphosphate. Its activity is regulated as follows. Activity increased by up to 80-fold under blue light. Acts as a blue light photoreceptor for the step-up photophobic response. Mediates photoavoidance. The sequence is that of Photoactivated adenylate cyclase subunit beta from Euglena gracilis.